Reading from the N-terminus, the 398-residue chain is Alpha-ketoglutarate-dependent dioxygenase bsc9 (398 aa).

Positions 167 and 169 each coordinate Fe cation. Threonine 212 is a 2-oxoglutarate binding site. Histidine 365 is a Fe cation binding site. Position 377 (arginine 377) interacts with 2-oxoglutarate.

It belongs to the TfdA dioxygenase family. Requires Fe(2+) as cofactor.

It participates in mycotoxin biosynthesis. In terms of biological role, alpha-ketoglutarate dependent dioxygenase; part of the gene cluster that mediates the biosynthesis of the diterpene glucoside brassicicene C. In the first step of the brassicicene C biosynthesis, the bifunctional diterpene synthase bsc8 that possesses both prenyl transferase and terpene cyclase activity, converts isopentenyl diphosphate and dimethylallyl diphosphate into geranylgeranyl diphosphate (GGDP) that is further converted into fusicocca-2,10(14)-diene, the first precursor for brassicicene C. Fusicocca-2,10(14)-diene is then substrate of cytochrome P450 monooxygenase bsc1 for hydroxylation at the C-8 position. Oxidation at C-16 position to aldehyde is then catalyzed by the cytochrome P450 monooyxygenase bsc7, yielding fusicocca-2,10(14)-diene-8-beta,16-diol. Follows the isomerization of the double bond and reduction of aldehyde to alcohol catalyzed by the short-chain dehydrogenase/reductase bsc3 to yield the diol compound fusicocca-1,10(14)-diene-8 beta,16-diol. The next step is the oxidation at the C-3 position of fusicocca-2,10(14)-diene-8-beta,16-diol catalyzed by the alpha-ketoglutarate dependent dioxygenase bsc9, to produce a triol compound. Methylation of the hydroxy group at position 16 is performed by the methyltransferase bsc6. 16-O-methylation is followed by oxidation at the C-13 position to ketone and an alkyl shift of the methyl group leads to brassicicene C. Although the probable acetyltransferase bsc4 is included in the gene cluster, no acetylation reactions are necessary for brassicicene C biosynthesis. However, the fact that brassicicene E, which is a structurally related compound having an acetoxy group at position 12, was previously isolated from another strain of A.brassicicola suggests that the ATCC 96836 strain might also produce a small amount of brassicicene E. The protein is Alpha-ketoglutarate-dependent dioxygenase bsc9 of Alternaria brassicicola (Dark leaf spot agent).